The sequence spans 257 residues: MLRLLTRSQAFRAVTLCQRPIISSRCIPIRNFQISPILAKKNKAKGGNKNKSEVQEIEEDNTDNQVPEIDFDDATNKFKGVIERFSKQANEAKLGKTSPNIFDKLIVETANGEVGFTSVAQTTVKGRNFMITVFDPSNVKSIINAVLGSDLNMNPQIDPSNKQTLKVPLPPLTTESKKENAKQLKLVYERFKNGSGRANGSLATIRGDVKNKFQKQHKKKKLSDAEEKVFKDFEKLHKQYTDKLTEVFKSAEQAILK.

The protein belongs to the RRF family.

The protein resides in the mitochondrion. Its function is as follows. Necessary for protein synthesis in mitochondria. Functions as a ribosome recycling factor in mitochondria. This is Ribosome-recycling factor, mitochondrial (RRF1) from Debaryomyces hansenii (strain ATCC 36239 / CBS 767 / BCRC 21394 / JCM 1990 / NBRC 0083 / IGC 2968) (Yeast).